The primary structure comprises 137 residues: Large ribosomal subunit protein eL32 (137 aa).

The disordered stretch occupies residues 95–137 (PSAAEIATPVSSRKRIASSPARQADRCSRSRRSKFRPRRLRAS). Residues 123–137 (RSRRSKFRPRRLRAS) show a composition bias toward basic residues.

The protein belongs to the eukaryotic ribosomal protein eL32 family.

The sequence is that of Large ribosomal subunit protein eL32 (rpl32) from Trichoderma harzianum (Hypocrea lixii).